The chain runs to 274 residues: MVINQKNLSSPVAPYDKSGSQSSTKADIPSINYTVDHSFQKRETSGKELSEATPQVTQSLSNQLILTTLNDLYNWARLSSLWPLLYGTSCCFIEFASLLGSRFDFDRFGLVPRSSPRQADLIITAGTVTMKMAPSLVRLYEQMPEPKYVIAMGACTITGGMFSTDSYSTVRGVDKLIPVDVYLPGCPPKPEAIIDAVIKLRKKVAQEDFVERNNFRQIHRYYSISHEFKSSSTVHTGKYLQSSERKSPPKELSEATGIPIQFILKNTQKTEIQP.

2 stretches are compositionally biased toward polar residues: residues 1 to 10 and 18 to 27; these read MVINQKNLSS and SGSQSSTKAD. Positions 1 to 27 are disordered; it reads MVINQKNLSSPVAPYDKSGSQSSTKAD. The [4Fe-4S] cluster site is built by Cys-90, Cys-91, Cys-155, and Cys-186.

The protein belongs to the complex I 20 kDa subunit family. In terms of assembly, NDH is composed of at least 16 different subunits, 5 of which are encoded in the nucleus. [4Fe-4S] cluster serves as cofactor.

It is found in the plastid. The protein localises to the chloroplast thylakoid membrane. It carries out the reaction a plastoquinone + NADH + (n+1) H(+)(in) = a plastoquinol + NAD(+) + n H(+)(out). The catalysed reaction is a plastoquinone + NADPH + (n+1) H(+)(in) = a plastoquinol + NADP(+) + n H(+)(out). In terms of biological role, NDH shuttles electrons from NAD(P)H:plastoquinone, via FMN and iron-sulfur (Fe-S) centers, to quinones in the photosynthetic chain and possibly in a chloroplast respiratory chain. The immediate electron acceptor for the enzyme in this species is believed to be plastoquinone. Couples the redox reaction to proton translocation, and thus conserves the redox energy in a proton gradient. The sequence is that of NAD(P)H-quinone oxidoreductase subunit K, chloroplastic from Chlorokybus atmophyticus (Soil alga).